A 194-amino-acid chain; its full sequence is Probable nicotinate-nucleotide adenylyltransferase (194 aa).

It belongs to the NadD family.

It carries out the reaction nicotinate beta-D-ribonucleotide + ATP + H(+) = deamido-NAD(+) + diphosphate. Its pathway is cofactor biosynthesis; NAD(+) biosynthesis; deamido-NAD(+) from nicotinate D-ribonucleotide: step 1/1. Catalyzes the reversible adenylation of nicotinate mononucleotide (NaMN) to nicotinic acid adenine dinucleotide (NaAD). In Chlorobium luteolum (strain DSM 273 / BCRC 81028 / 2530) (Pelodictyon luteolum), this protein is Probable nicotinate-nucleotide adenylyltransferase.